A 126-amino-acid polypeptide reads, in one-letter code: Large ribosomal subunit protein uL29 (126 aa).

The protein belongs to the universal ribosomal protein uL29 family.

The sequence is that of Large ribosomal subunit protein uL29 (rpl35) from Dictyostelium discoideum (Social amoeba).